A 599-amino-acid chain; its full sequence is Elongation factor 4 (599 aa).

One can recognise a tr-type G domain in the interval 5–187 (SHIRNFSIIA…ELVRLVPPPT (183 aa)). Residues 17–22 (DHGKST) and 134–137 (NKMD) each bind GTP.

Belongs to the TRAFAC class translation factor GTPase superfamily. Classic translation factor GTPase family. LepA subfamily.

The protein resides in the cell inner membrane. The enzyme catalyses GTP + H2O = GDP + phosphate + H(+). Its function is as follows. Required for accurate and efficient protein synthesis under certain stress conditions. May act as a fidelity factor of the translation reaction, by catalyzing a one-codon backward translocation of tRNAs on improperly translocated ribosomes. Back-translocation proceeds from a post-translocation (POST) complex to a pre-translocation (PRE) complex, thus giving elongation factor G a second chance to translocate the tRNAs correctly. Binds to ribosomes in a GTP-dependent manner. The chain is Elongation factor 4 from Cellvibrio japonicus (strain Ueda107) (Pseudomonas fluorescens subsp. cellulosa).